Here is a 538-residue protein sequence, read N- to C-terminus: MTDLNKVINELGELGIYDVKEIVHNPSYEQLFEEETKPGLAGFEKGVVTTSGAVAVDTGIFTGRSPKDKYIVLDEKTKNTVWWTSDAAKNDNKPMNQETWQSLKGLVTKQLSGKRLFVIDAFCGANPDTRLAVRIVTEVAWQAHFVKNMFIRPSDEELQNFKPDFTVMNGSKVTNPNWKEQGLNSENFVAFNITEGVQLIGGTWYGGEMKKGMFSMMNYFLPLKGIASMHCSANVGKDGDVAIFFGLSGTGKTTLSTDPKRQLIGDDEHGWDDDGVFNYEGGCYAKTIKLSAESEPDIYRAIRRDALLENVVVREDGSVDFDDGSKTENTRVSYPIYHIDNIVKPVSKAGHATKVIFLTADAFGVLPPVSKLTPEQTKYYFLSGFTAKLAGTERGITEPTPTFSACFGAAFLSLHPTQYAEVLVKRMKDSGAEAYLVNTGWNGTGKRISIKDTRGIIDAILDGSIESAEMGSLPIFDLAIPKALPGVDPAILDPRDTYADKAQWQAKAEDLASRFVKNFEKYATNEEGKALIAAGPKA.

The substrate site is built by R64, Y205, and K211. Residues K211, H230, and 246–254 (GLSGTGKTT) contribute to the ATP site. Positions 211 and 230 each coordinate Mn(2+). A Mn(2+)-binding site is contributed by D267. ATP is bound by residues E295, R331, 447 to 448 (RI), and T453. A substrate-binding site is contributed by R331.

The protein belongs to the phosphoenolpyruvate carboxykinase (ATP) family. In terms of assembly, monomer. It depends on Mn(2+) as a cofactor.

The protein localises to the cytoplasm. The enzyme catalyses oxaloacetate + ATP = phosphoenolpyruvate + ADP + CO2. It participates in carbohydrate biosynthesis; gluconeogenesis. Its function is as follows. Involved in the gluconeogenesis. Catalyzes the conversion of oxaloacetate (OAA) to phosphoenolpyruvate (PEP) through direct phosphoryl transfer between the nucleoside triphosphate and OAA. The sequence is that of Phosphoenolpyruvate carboxykinase (ATP) from Histophilus somni (strain 129Pt) (Haemophilus somnus).